We begin with the raw amino-acid sequence, 403 residues long: Na(+)-translocating NADH-quinone reductase subunit B (403 aa).

The next 4 membrane-spanning stretches (helical) occupy residues 56–76, 121–141, 164–184, and 195–212; these read MMILVWLCTFPAMFFGMWNTG, AYFLPIYAVTFIVGGFWEVLF, LPPSIPLWQVAMGISFGVVIG, and FLNPALVGRAFLFFAYPA. FMN phosphoryl threonine is present on threonine 230. Transmembrane regions (helical) follow at residues 237–257, 265–285, 287–307, 312–332, 348–368, and 371–391; these read AGGVEGVVSAGVSWMDAFLGI, TSTLAILIGGAVLLLTKIAAW, IVAGVMVGMVVLSSLFNLIGS, MFAMPWYWHLVAGGFAFGTLF, WAFGILIGVMVVLIRVVNPAF, and GMMLAILFGNLCAPLIDHFVV.

It belongs to the NqrB/RnfD family. As to quaternary structure, composed of six subunits; NqrA, NqrB, NqrC, NqrD, NqrE and NqrF. It depends on FMN as a cofactor.

The protein localises to the cell inner membrane. The catalysed reaction is a ubiquinone + n Na(+)(in) + NADH + H(+) = a ubiquinol + n Na(+)(out) + NAD(+). Functionally, NQR complex catalyzes the reduction of ubiquinone-1 to ubiquinol by two successive reactions, coupled with the transport of Na(+) ions from the cytoplasm to the periplasm. NqrA to NqrE are probably involved in the second step, the conversion of ubisemiquinone to ubiquinol. In Azotobacter vinelandii (strain DJ / ATCC BAA-1303), this protein is Na(+)-translocating NADH-quinone reductase subunit B.